The chain runs to 439 residues: Probable aspartic-type endopeptidase AFUA_3G01220 (439 aa).

The first 20 residues, 1-20 (MHFSIGSLFLYLIASASCTA), serve as a signal peptide directing secretion. A disordered region spans residues 31–50 (RTPFTTSTSKPSAFTNPSTD). A compositionally biased stretch (low complexity) spans 32-45 (TPFTTSTSKPSAFT). In terms of domain architecture, Peptidase A1 spans 95 to 436 (FATSINIGNQ…DVGAAEMRFA (342 aa)). The N-linked (GlcNAc...) asparagine glycan is linked to Asn-103. Asp-111 is an active-site residue. 7 N-linked (GlcNAc...) asparagine glycosylation sites follow: Asn-149, Asn-178, Asn-187, Asn-253, Asn-256, Asn-276, and Asn-308. Asp-323 is a catalytic residue. N-linked (GlcNAc...) asparagine glycans are attached at residues Asn-361 and Asn-394.

The protein belongs to the peptidase A1 family.

It localises to the secreted. In terms of biological role, probable aspartic-type endopeptidase which contributes to virulence. This is Probable aspartic-type endopeptidase AFUA_3G01220 from Aspergillus fumigatus (strain ATCC MYA-4609 / CBS 101355 / FGSC A1100 / Af293) (Neosartorya fumigata).